The primary structure comprises 373 residues: Arabinonate dehydratase (373 aa).

Residues aspartate 199, glutamate 225, and glutamate 251 each coordinate Mg(2+).

Belongs to the mandelate racemase/muconate lactonizing enzyme family. In terms of assembly, homooctamer. Mg(2+) is required as a cofactor.

It carries out the reaction D-arabinonate = 2-dehydro-3-deoxy-D-arabinonate + H2O. Its activity is regulated as follows. Inhibited by substrate levels above 8 mM. Functionally, catalyzes the dehydration of D-arabinonate to 2-keto-3-deoxy-D-arabinonate. Participates in a pentose oxidation pathway that converts D-arabinonate to 2-oxoglutarate. The chain is Arabinonate dehydratase from Saccharolobus solfataricus (strain ATCC 35092 / DSM 1617 / JCM 11322 / P2) (Sulfolobus solfataricus).